The following is a 252-amino-acid chain: 5'-nucleotidase SurE (252 aa).

Positions 8, 9, 39, and 95 each coordinate a divalent metal cation.

This sequence belongs to the SurE nucleotidase family. A divalent metal cation is required as a cofactor.

The protein localises to the cytoplasm. The catalysed reaction is a ribonucleoside 5'-phosphate + H2O = a ribonucleoside + phosphate. In terms of biological role, nucleotidase that shows phosphatase activity on nucleoside 5'-monophosphates. This is 5'-nucleotidase SurE from Clostridium botulinum (strain Loch Maree / Type A3).